The sequence spans 101 residues: Small ribosomal subunit protein cS23 (101 aa).

The protein belongs to the chloroplast-specific ribosomal protein cS23 family. As to quaternary structure, part of the 30S ribosomal subunit.

The protein resides in the plastid. The protein localises to the chloroplast. Its function is as follows. Probably a ribosomal protein or a ribosome-associated protein. This chain is Small ribosomal subunit protein cS23 (ycf65), found in Euglena stellata.